The following is a 180-amino-acid chain: Cytochrome b6-f complex iron-sulfur subunit (180 aa).

Residues 21 to 43 (LLTFGTITGTALGALYPVVKYFI) form a helical membrane-spanning segment. A Rieske domain is found at 66–162 (VSEYLAKHLP…ATVTEDDKLV (97 aa)). [2Fe-2S] cluster-binding residues include Cys-108, His-110, Cys-126, and His-129. Cys-113 and Cys-128 are oxidised to a cystine.

The protein belongs to the Rieske iron-sulfur protein family. In terms of assembly, the 4 large subunits of the cytochrome b6-f complex are cytochrome b6, subunit IV (17 kDa polypeptide, PetD), cytochrome f and the Rieske protein, while the 4 small subunits are PetG, PetL, PetM and PetN. The complex functions as a dimer. [2Fe-2S] cluster serves as cofactor.

It is found in the cellular thylakoid membrane. It catalyses the reaction 2 oxidized [plastocyanin] + a plastoquinol + 2 H(+)(in) = 2 reduced [plastocyanin] + a plastoquinone + 4 H(+)(out). Component of the cytochrome b6-f complex, which mediates electron transfer between photosystem II (PSII) and photosystem I (PSI), cyclic electron flow around PSI, and state transitions. The chain is Cytochrome b6-f complex iron-sulfur subunit from Thermosynechococcus vestitus (strain NIES-2133 / IAM M-273 / BP-1).